The following is a 756-amino-acid chain: Pro-neuregulin-2, membrane-bound isoform (756 aa).

The propeptide occupies 1-19 (MRRDPAPGFSMLLFGVSLA). Residues 20–315 (CYSPSLKSVQ…KEAEELYQKR (296 aa)) lie on the Extracellular side of the membrane. N-linked (GlcNAc...) asparagine glycosylation is found at Asn-55, Asn-186, and Asn-254. Residues 145–240 (PKLKKMKSQT…RGRLHVNSVS (96 aa)) form the Ig-like C2-type domain. 4 cysteine pairs are disulfide-bonded: Cys-165/Cys-219, Cys-253/Cys-267, Cys-261/Cys-278, and Cys-280/Cys-289. The EGF-like domain maps to 249-290 (HARKCNETAKSYCVNGGVCYYIEGINQLSCKCPVGYTGDRCQ). An N-linked (GlcNAc...) asparagine glycan is attached at Asn-296. A helical membrane pass occupies residues 316–336 (VLTITGICVALLVVGIVCVVA). Topologically, residues 337–756 (YCKTKKQRRQ…TRAKQDSGPL (420 aa)) are cytoplasmic. Disordered stretches follow at residues 402–439 (TFSGSHSCSPSHHCSTATPTSSHRHESHTWSLERSESL), 557–578 (LLRHPAPPGPGPGSGPGADMQR), 608–694 (ASPF…DGAL), and 711–756 (LRSD…SGPL). The segment covering 404-416 (SGSHSCSPSHHCS) has biased composition (low complexity). Residues 424-437 (HRHESHTWSLERSE) show a composition bias toward basic and acidic residues. Residues 654-682 (LNGLAAQRARAARDSLSLSSGSGCGSASA) show a composition bias toward low complexity.

This sequence belongs to the neuregulin family. In terms of assembly, interacts with ERBB3 and ERBB4. In terms of processing, proteolytic cleavage close to the plasma membrane on the external face leads to the release of the soluble growth factor form. Post-translationally, extensive glycosylation precedes the proteolytic cleavage. As to expression, highest expression in the brain, with lower levels in the lung. In the cerebellum, found in granule and Purkinje cells.

The protein localises to the cell membrane. It localises to the secreted. Its function is as follows. Direct ligand for ERBB3 and ERBB4 tyrosine kinase receptors. Concomitantly recruits ERBB1 and ERBB2 coreceptors, resulting in ligand-stimulated tyrosine phosphorylation and activation of the ERBB receptors. May also promote the heterodimerization with the EGF receptor. The polypeptide is Pro-neuregulin-2, membrane-bound isoform (Nrg2) (Mus musculus (Mouse)).